Consider the following 300-residue polypeptide: MAQKVEAGGGAGGASWDDGVHDGVRKVHVGQGQDGVSSINVVYAKDSQDVEGGEHGKKTLLGFETFEVDADDYIVAVQVTYDNVFGQDSDIITSITFNTFKGKTSPPYGLETQKKFVLKDKNGGKLVGFHGRAGEALYALGAYFATTTTPVTPAKKLSAIGGDEGTAWDDGAYDGVKKVYVGQGQDGISAVKFEYNKGAENIVGGEHGKPTLLGFEEFEIDYPSEYITAVEGTYDKIFGSDGLIITMLRFKTNKQTSAPFGLEAGTAFELKEEGHKIVGFHGKASELLHQFGVHVMPLTN.

Residues 1 to 20 (MAQKVEAGGGAGGASWDDGV) are disordered. An N-acetylalanine modification is found at Ala2. Jacalin-type lectin domains lie at 2–146 (AQKV…YFAT) and 154–297 (AKKL…HVMP).

It belongs to the jacalin lectin family. Component of the PYK10 complex, at least composed of PYK10/BGLU23, BGLU21, BGLU22, JAL22, JAL23, PBP1/JAL30, PBP2/JAL31, JAL32, JAL33, JAL34, JAL35, GLL22 and GLL23.

In terms of biological role, sugar-binding protein showing significant affinity for (Glc alpha(1-4)Glc)(3) maltohexaose, (Glc alpha(1-6)Glc)(3) isomaltohexaose, Gal alpha(1-4)Gal beta(1-4)Glc, GalNAc alpha(1-3)(Fuc alpha(1-2)) and Gal beta(1-3)(Fuc alpha(1-4))GlcNAc beta(1-3)Gal beta(1-4)Glc. The protein is Jacalin-related lectin 33 (JAL33) of Arabidopsis thaliana (Mouse-ear cress).